The chain runs to 233 residues: Small ribosomal subunit protein uS3 (233 aa).

Positions 39 to 107 (VRQYLNKELA…PAQINIAEVR (69 aa)) constitute a KH type-2 domain.

It belongs to the universal ribosomal protein uS3 family. In terms of assembly, part of the 30S ribosomal subunit. Forms a tight complex with proteins S10 and S14.

Its function is as follows. Binds the lower part of the 30S subunit head. Binds mRNA in the 70S ribosome, positioning it for translation. In Cronobacter sakazakii (strain ATCC BAA-894) (Enterobacter sakazakii), this protein is Small ribosomal subunit protein uS3.